Consider the following 291-residue polypeptide: Pituitary-specific positive transcription factor 1 (291 aa).

The 9aaTAD signature appears at 5–13 (AFTSADTFI). Residues 124–198 (MDSPEIRELE…ILSKWLEEAE (75 aa)) form the POU-specific domain. Residues 214–273 (KRKRRTTISIAAKDALERHFGEQNKPSSQEIMRMAEELNLEKEVVRVWFCNRRQREKRVK) constitute a DNA-binding region (homeobox).

This sequence belongs to the POU transcription factor family. Class-1 subfamily. In terms of assembly, interacts with PITX1. Interacts with LHX3. Interacts with ELK1.

It localises to the nucleus. Functionally, transcription factor involved in the specification of the lactotrope, somatotrope, and thyrotrope phenotypes in the developing anterior pituitary. Activates growth hormone and prolactin genes. Specifically binds to the consensus sequence 5'-TAAAT-3'. This is Pituitary-specific positive transcription factor 1 (POU1F1) from Macaca mulatta (Rhesus macaque).